The chain runs to 138 residues: Ribosome-binding factor A (138 aa).

The segment at 119–138 is disordered; the sequence is DMDEKKNSDEKRDSDEKLED.

It belongs to the RbfA family. As to quaternary structure, monomer. Binds 30S ribosomal subunits, but not 50S ribosomal subunits or 70S ribosomes.

Its subcellular location is the cytoplasm. In terms of biological role, one of several proteins that assist in the late maturation steps of the functional core of the 30S ribosomal subunit. Associates with free 30S ribosomal subunits (but not with 30S subunits that are part of 70S ribosomes or polysomes). Required for efficient processing of 16S rRNA. May interact with the 5'-terminal helix region of 16S rRNA. This chain is Ribosome-binding factor A, found in Alkaliphilus metalliredigens (strain QYMF).